A 331-amino-acid chain; its full sequence is Ketol-acid reductoisomerase (NADP(+)) (331 aa).

The KARI N-terminal Rossmann domain occupies 2 to 182; sequence VEIYYDDDAN…GGTRAGALRT (181 aa). NADP(+)-binding positions include 25–28, S51, and S53; that span reads FGSQ. H108 is an active-site residue. G134 contacts NADP(+). One can recognise a KARI C-terminal knotted domain in the interval 183–328; sequence TFTEETETDL…GKLRPMMSWI (146 aa). Mg(2+) is bound by residues D191, E195, E227, and E231. Substrate is bound at residue S252.

It belongs to the ketol-acid reductoisomerase family. Mg(2+) serves as cofactor.

It carries out the reaction (2R)-2,3-dihydroxy-3-methylbutanoate + NADP(+) = (2S)-2-acetolactate + NADPH + H(+). It catalyses the reaction (2R,3R)-2,3-dihydroxy-3-methylpentanoate + NADP(+) = (S)-2-ethyl-2-hydroxy-3-oxobutanoate + NADPH + H(+). It functions in the pathway amino-acid biosynthesis; L-isoleucine biosynthesis; L-isoleucine from 2-oxobutanoate: step 2/4. It participates in amino-acid biosynthesis; L-valine biosynthesis; L-valine from pyruvate: step 2/4. Its function is as follows. Involved in the biosynthesis of branched-chain amino acids (BCAA). Catalyzes an alkyl-migration followed by a ketol-acid reduction of (S)-2-acetolactate (S2AL) to yield (R)-2,3-dihydroxy-isovalerate. In the isomerase reaction, S2AL is rearranged via a Mg-dependent methyl migration to produce 3-hydroxy-3-methyl-2-ketobutyrate (HMKB). In the reductase reaction, this 2-ketoacid undergoes a metal-dependent reduction by NADPH to yield (R)-2,3-dihydroxy-isovalerate. The polypeptide is Ketol-acid reductoisomerase (NADP(+)) (Parafrankia sp. (strain EAN1pec)).